Here is a 178-residue protein sequence, read N- to C-terminus: Large ribosomal subunit protein bL25 (178 aa).

The protein belongs to the bacterial ribosomal protein bL25 family. CTC subfamily. As to quaternary structure, part of the 50S ribosomal subunit; part of the 5S rRNA/L5/L18/L25 subcomplex. Contacts the 5S rRNA. Binds to the 5S rRNA independently of L5 and L18.

This is one of the proteins that binds to the 5S RNA in the ribosome where it forms part of the central protuberance. The chain is Large ribosomal subunit protein bL25 from Helicobacter pylori (strain Shi470).